Consider the following 349-residue polypeptide: Hydroxymethylglutaryl-CoA synthase (349 aa).

D29 lines the (3S)-3-hydroxy-3-methylglutaryl-CoA pocket. Catalysis depends on E81, which acts as the Proton donor/acceptor. 4 residues coordinate (3S)-3-hydroxy-3-methylglutaryl-CoA: C113, S154, T202, and H235. C113 serves as the catalytic Acyl-thioester intermediate. The Proton donor/acceptor role is filled by H235. Residue R240 coordinates CoA. (3S)-3-hydroxy-3-methylglutaryl-CoA is bound by residues R244, N267, and S297.

Belongs to the thiolase-like superfamily. Archaeal HMG-CoA synthase family. As to quaternary structure, interacts with acetoacetyl-CoA thiolase that catalyzes the precedent step in the pathway and with a DUF35 protein. The acetoacetyl-CoA thiolase/HMG-CoA synthase complex channels the intermediate via a fused CoA-binding site, which allows for efficient coupling of the endergonic thiolase reaction with the exergonic HMGCS reaction.

The catalysed reaction is acetoacetyl-CoA + acetyl-CoA + H2O = (3S)-3-hydroxy-3-methylglutaryl-CoA + CoA + H(+). The protein operates within metabolic intermediate biosynthesis; (R)-mevalonate biosynthesis; (R)-mevalonate from acetyl-CoA: step 2/3. In terms of biological role, catalyzes the condensation of acetyl-CoA with acetoacetyl-CoA to form 3-hydroxy-3-methylglutaryl-CoA (HMG-CoA). Functions in the mevalonate (MVA) pathway leading to isopentenyl diphosphate (IPP), a key precursor for the biosynthesis of isoprenoid compounds that are building blocks of archaeal membrane lipids. The polypeptide is Hydroxymethylglutaryl-CoA synthase (Pyrobaculum arsenaticum (strain DSM 13514 / JCM 11321 / PZ6)).